Reading from the N-terminus, the 289-residue chain is MTPVEFLASNPLAFVLCALVLGLLVGSFLNVVIHRLPIMMQRDWQSQAREFLELPAEPAGAAFNLFLPHSRCPHCDHQIRAWENIPLISWLALRGKCSACKASISKRYPLVELACGLLSGYVAWHFGFSWQAGAMLLLTWGLLAMSMIDVDHQLLPDSLVLPLLWLGLIINSFGLFASLEDALWGAVVGYLALWSVYWLFKLVTGKEGMGYGDFKLLAMLGAWGGWQVLPLTILLSSVVGAVLGTVMLRMQKAESGTPIPFGPYLAIAGWVALLWGDQITASYLQFARL.

The helical transmembrane segment at 13-33 threads the bilayer; sequence AFVLCALVLGLLVGSFLNVVI. The Zn(2+) site is built by Cys-72, Cys-75, Cys-97, and Cys-100. 5 helical membrane-spanning segments follow: residues 128-148, 159-179, 183-203, 228-248, and 256-276; these read FSWQ…MSMI, LVLP…FASL, LWGA…FKLV, VLPL…TVML, and GTPI…LLWG.

This sequence belongs to the peptidase A24 family. The cofactor is Zn(2+).

The protein resides in the cell inner membrane. It catalyses the reaction Typically cleaves a -Gly-|-Phe- bond to release an N-terminal, basic peptide of 5-8 residues from type IV prepilin, and then N-methylates the new N-terminal amino group, the methyl donor being S-adenosyl-L-methionine.. In terms of biological role, plays an essential role in type IV pili and type II pseudopili formation by proteolytically removing the leader sequence from substrate proteins and subsequently monomethylating the alpha-amino group of the newly exposed N-terminal phenylalanine. This is Prepilin leader peptidase/N-methyltransferase (pilD) from Stutzerimonas stutzeri (Pseudomonas stutzeri).